We begin with the raw amino-acid sequence, 140 residues long: Small ribosomal subunit protein uS19 (140 aa).

It belongs to the universal ribosomal protein uS19 family.

In terms of biological role, protein S19 forms a complex with S13 that binds strongly to the 16S ribosomal RNA. This chain is Small ribosomal subunit protein uS19, found in Sulfolobus acidocaldarius (strain ATCC 33909 / DSM 639 / JCM 8929 / NBRC 15157 / NCIMB 11770).